The following is a 333-amino-acid chain: HPr kinase/phosphorylase (333 aa).

Catalysis depends on residues His155 and Lys176. 170–177 (GKSGLGKS) is an ATP binding site. Residue Ser177 coordinates Mg(2+). Asp194 acts as the Proton acceptor; for phosphorylation activity. Proton donor; for dephosphorylation activity in catalysis. The important for the catalytic mechanism of both phosphorylation and dephosphorylation stretch occupies residues 219–228 (MEIRGLGVVD). Glu220 contributes to the Mg(2+) binding site. Arg261 is an active-site residue. The interval 282 to 287 (PILPGK) is important for the catalytic mechanism of dephosphorylation.

Belongs to the HPrK/P family. In terms of assembly, homohexamer. It depends on Mg(2+) as a cofactor.

The catalysed reaction is [HPr protein]-L-serine + ATP = [HPr protein]-O-phospho-L-serine + ADP + H(+). It carries out the reaction [HPr protein]-O-phospho-L-serine + phosphate + H(+) = [HPr protein]-L-serine + diphosphate. Functionally, catalyzes the ATP- as well as the pyrophosphate-dependent phosphorylation of a specific serine residue in HPr, a phosphocarrier protein of the phosphoenolpyruvate-dependent sugar phosphotransferase system (PTS). HprK/P also catalyzes the pyrophosphate-producing, inorganic phosphate-dependent dephosphorylation (phosphorolysis) of seryl-phosphorylated HPr (P-Ser-HPr). This is HPr kinase/phosphorylase from Chlorobium chlorochromatii (strain CaD3).